Reading from the N-terminus, the 428-residue chain is Adenylosuccinate synthetase (428 aa).

GTP contacts are provided by residues 12–18 (GDEGKGK) and 40–42 (GHT). The Proton acceptor role is filled by Asp-13. Positions 13 and 40 each coordinate Mg(2+). IMP contacts are provided by residues 13–16 (DEGK), 38–41 (NAGH), Thr-127, Arg-141, Gln-222, Thr-237, and Arg-301. Catalysis depends on His-41, which acts as the Proton donor. 297–303 (TVTKRPR) contacts substrate. Residues Arg-303, 329–331 (CLD), and 411–413 (SVG) contribute to the GTP site.

This sequence belongs to the adenylosuccinate synthetase family. As to quaternary structure, homodimer. The cofactor is Mg(2+).

It localises to the cytoplasm. It catalyses the reaction IMP + L-aspartate + GTP = N(6)-(1,2-dicarboxyethyl)-AMP + GDP + phosphate + 2 H(+). It participates in purine metabolism; AMP biosynthesis via de novo pathway; AMP from IMP: step 1/2. Plays an important role in the de novo pathway of purine nucleotide biosynthesis. Catalyzes the first committed step in the biosynthesis of AMP from IMP. This chain is Adenylosuccinate synthetase, found in Levilactobacillus brevis (strain ATCC 367 / BCRC 12310 / CIP 105137 / JCM 1170 / LMG 11437 / NCIMB 947 / NCTC 947) (Lactobacillus brevis).